A 183-amino-acid polypeptide reads, in one-letter code: Ribosome maturation factor RimM (183 aa).

The 76-residue stretch at 96–171 (PDEFYDHELE…VALIDPPEGL (76 aa)) folds into the PRC barrel domain.

Belongs to the RimM family. Binds ribosomal protein uS19.

The protein resides in the cytoplasm. Its function is as follows. An accessory protein needed during the final step in the assembly of 30S ribosomal subunit, possibly for assembly of the head region. Essential for efficient processing of 16S rRNA. May be needed both before and after RbfA during the maturation of 16S rRNA. It has affinity for free ribosomal 30S subunits but not for 70S ribosomes. This is Ribosome maturation factor RimM from Rhodococcus jostii (strain RHA1).